A 124-amino-acid chain; its full sequence is Tax1-binding protein 3 (124 aa).

An N-acetylserine modification is found at S2. Residues 15–112 form the PDZ domain; it reads RVEIHKLRQG…EVVRLLVTRQ (98 aa). S61 carries the phosphoserine modification.

In terms of assembly, interacts (via its PDZ domain) with GLS2. Interacts (via its PDZ domain) with RTKN (via the C-terminal region); this interaction facilitates Rho-mediated activation of the FOS serum response element (SRE). Interacts (via its PDZ domain) with CTNNB1; this interaction inhibits the transcriptional activity of CTNNB1. Interacts with HTLV-1 TAX protein. Interacts (via PDZ domain) with ARHGEF16. Interacts (via PDZ domain) with KCNJ4 (via C-terminus). Competes with LIN7A for KCNJ4 binding. Interacts with ADGRB2. As to expression, ubiquitous. Detected in brain, heart, kidney, lung, small intestine and skeletal muscle. Detected in various cell lines including HeLa. Weakly expressed in peripheral blood leukocytes.

The protein localises to the cytoplasm. It is found in the nucleus. The protein resides in the cell membrane. In terms of biological role, may regulate a number of protein-protein interactions by competing for PDZ domain binding sites. Binds CTNNB1 and may thereby act as an inhibitor of the Wnt signaling pathway. Competes with LIN7A for KCNJ4 binding, and thereby promotes KCNJ4 internalization. May play a role in the Rho signaling pathway. May play a role in activation of CDC42 by the viral protein HPV16 E6. In Homo sapiens (Human), this protein is Tax1-binding protein 3.